Consider the following 438-residue polypeptide: Xylose isomerase (438 aa).

Mg(2+) contacts are provided by Asp-306 and Asp-308.

It belongs to the xylose isomerase family. As to quaternary structure, homotetramer. Mg(2+) serves as cofactor.

The protein resides in the cytoplasm. The catalysed reaction is alpha-D-xylose = alpha-D-xylulofuranose. This Caldicellulosiruptor bescii (strain ATCC BAA-1888 / DSM 6725 / KCTC 15123 / Z-1320) (Anaerocellum thermophilum) protein is Xylose isomerase.